A 206-amino-acid chain; its full sequence is Flavin reductase (NADPH) (206 aa).

Positions 10, 12, 13, 14, 15, 35, 38, and 39 each coordinate NADP(+). Residue serine 42 is modified to Phosphoserine. The NADP(+) site is built by aspartate 54, valine 55, leucine 75, glycine 76, and arginine 78. Serine 82 bears the Phosphoserine mark. Positions 87, 109, 132, 153, and 154 each coordinate NADP(+). Residue cysteine 109 is the S-nitroso-cysteine intermediate; for S-nitroso-CoA-dependent nitrosyltransferase activity of the active site. Catalysis depends on cysteine 188, which acts as the S-nitroso-cysteine intermediate; for S-nitroso-CoA-dependent nitrosyltransferase activity.

It belongs to the BLVRB family. Monomer. In terms of tissue distribution, predominantly expressed in liver and erythrocytes. At lower levels in heart, lung, adrenal gland and cerebrum. Expressed in adult red blood cells.

The protein localises to the cytoplasm. It catalyses the reaction reduced riboflavin + NADP(+) = riboflavin + NADPH + 2 H(+). The enzyme catalyses bilirubin IXbeta + NADP(+) = biliverdin IXbeta + NADPH + H(+). It carries out the reaction FMNH2 + NAD(+) = FMN + NADH + 2 H(+). The catalysed reaction is FMNH2 + NADP(+) = FMN + NADPH + 2 H(+). It catalyses the reaction S-nitroso-CoA + L-cysteinyl-[protein] = S-nitroso-L-cysteinyl-[protein] + CoA. The enzyme catalyses L-cysteinyl-[SCAN] + S-nitroso-CoA = S-nitroso-L-cysteinyl-[SCAN] + CoA. It carries out the reaction S-nitroso-L-cysteinyl-[SCAN] + L-cysteinyl-[protein] = L-cysteinyl-[SCAN] + S-nitroso-L-cysteinyl-[protein]. With respect to regulation, mesobiliverdin acts as a competitive inhibitor for flavin reduction, indicating that flavin and tetrapyrrole substrates compete for the same site. Inhibited by a wide range of xanthene-based drugs, such as phloxine B, erythrosin B, tamibarotene, sulfasalazine, olsalazine, febuxostat, ataluren (PTC124) and deferasirox. Its function is as follows. Enzyme that can both act as a NAD(P)H-dependent reductase and a S-nitroso-CoA-dependent nitrosyltransferase. Promotes fetal heme degradation during development. Also expressed in adult tissues, where it acts as a regulator of hematopoiesis, intermediary metabolism (glutaminolysis, glycolysis, TCA cycle and pentose phosphate pathway) and insulin signaling. Has a broad specificity oxidoreductase activity by catalyzing the NAD(P)H-dependent reduction of a variety of flavins, such as riboflavin, FAD or FMN, biliverdins, methemoglobin and PQQ (pyrroloquinoline quinone). Contributes to fetal heme catabolism by catalyzing reduction of biliverdin IXbeta into bilirubin IXbeta in the liver. Biliverdin IXbeta, which constitutes the major heme catabolite in the fetus is not present in adult. Does not reduce bilirubin IXalpha. Can also reduce the complexed Fe(3+) iron to Fe(2+) in the presence of FMN and NADPH. Acts as a protein nitrosyltransferase by catalyzing nitrosylation of cysteine residues of target proteins, such as HMOX2, INSR and IRS1. S-nitroso-CoA-dependent nitrosyltransferase activity is mediated via a 'ping-pong' mechanism: BLVRB first associates with both S-nitroso-CoA and protein substrate, nitric oxide group is then transferred from S-nitroso-CoA to Cys-109 and Cys-188 residues of BLVRB and from S-nitroso-BLVRB to the protein substrate. Inhibits insulin signaling by mediating nitrosylation of INSR and IRS1, leading to their inhibition. The chain is Flavin reductase (NADPH) from Homo sapiens (Human).